Here is a 291-residue protein sequence, read N- to C-terminus: 33 kDa chaperonin (291 aa).

Disulfide bonds link C229–C231 and C262–C265.

Belongs to the HSP33 family. In terms of processing, under oxidizing conditions two disulfide bonds are formed involving the reactive cysteines. Under reducing conditions zinc is bound to the reactive cysteines and the protein is inactive.

Its subcellular location is the cytoplasm. In terms of biological role, redox regulated molecular chaperone. Protects both thermally unfolding and oxidatively damaged proteins from irreversible aggregation. Plays an important role in the bacterial defense system toward oxidative stress. The protein is 33 kDa chaperonin of Aliivibrio fischeri (strain ATCC 700601 / ES114) (Vibrio fischeri).